The primary structure comprises 393 residues: NAD(P)H-quinone oxidoreductase subunit H, chloroplastic (393 aa).

It belongs to the complex I 49 kDa subunit family. NDH is composed of at least 16 different subunits, 5 of which are encoded in the nucleus.

The protein resides in the plastid. It localises to the chloroplast thylakoid membrane. It carries out the reaction a plastoquinone + NADH + (n+1) H(+)(in) = a plastoquinol + NAD(+) + n H(+)(out). The catalysed reaction is a plastoquinone + NADPH + (n+1) H(+)(in) = a plastoquinol + NADP(+) + n H(+)(out). In terms of biological role, NDH shuttles electrons from NAD(P)H:plastoquinone, via FMN and iron-sulfur (Fe-S) centers, to quinones in the photosynthetic chain and possibly in a chloroplast respiratory chain. The immediate electron acceptor for the enzyme in this species is believed to be plastoquinone. Couples the redox reaction to proton translocation, and thus conserves the redox energy in a proton gradient. The sequence is that of NAD(P)H-quinone oxidoreductase subunit H, chloroplastic from Phaseolus vulgaris (Kidney bean).